Reading from the N-terminus, the 219-residue chain is Proteasome subunit beta type-9 (219 aa).

A propeptide spans 1-20 (MLRAGAPTGDLPRAGEVHTG) (removed in mature form). The Nucleophile role is filled by T21. An N6-acetyllysine mark is found at K53 and K109.

The protein belongs to the peptidase T1B family. As to quaternary structure, the 26S proteasome consists of a 20S proteasome core and two 19S regulatory subunits. The 20S proteasome core is composed of 28 subunits that are arranged in four stacked rings, resulting in a barrel-shaped structure. The two end rings are each formed by seven alpha subunits, and the two central rings are each formed by seven beta subunits. The catalytic chamber with the active sites is on the inside of the barrel. Component of the immunoproteasome, where it displaces the equivalent housekeeping subunit PSMB6. Component of the spermatoproteasome, a form of the proteasome specifically found in testis. (Microbial infection) Interacts with HIV-1 TAT protein. In terms of processing, autocleaved. The resulting N-terminal Thr residue of the mature subunit is responsible for the nucleophile proteolytic activity.

The protein resides in the cytoplasm. It localises to the nucleus. It catalyses the reaction Cleavage of peptide bonds with very broad specificity.. The proteasome is a multicatalytic proteinase complex which is characterized by its ability to cleave peptides with Arg, Phe, Tyr, Leu, and Glu adjacent to the leaving group at neutral or slightly basic pH. The proteasome has an ATP-dependent proteolytic activity. This subunit is involved in antigen processing to generate class I binding peptides. Replacement of PSMB6 by PSMB9 increases the capacity of the immunoproteasome to cleave model peptides after hydrophobic and basic residues. The protein is Proteasome subunit beta type-9 (PSMB9) of Homo sapiens (Human).